Reading from the N-terminus, the 162-residue chain is Peptidyl-prolyl cis-trans isomerase-like 1 (162 aa).

Residues 1-155 enclose the PPIase cyclophilin-type domain; sequence MTTNIVLETT…EEVKIVKARV (155 aa).

This sequence belongs to the cyclophilin-type PPIase family. PPIL1 subfamily.

The enzyme catalyses [protein]-peptidylproline (omega=180) = [protein]-peptidylproline (omega=0). Functionally, PPIases accelerate the folding of proteins. It catalyzes the cis-trans isomerization of proline imidic peptide bonds in oligopeptides. The sequence is that of Peptidyl-prolyl cis-trans isomerase-like 1 (CYP1) from Gibberella zeae (strain ATCC MYA-4620 / CBS 123657 / FGSC 9075 / NRRL 31084 / PH-1) (Wheat head blight fungus).